Reading from the N-terminus, the 956-residue chain is Thrombospondin-3 (956 aa).

An N-terminal signal peptide occupies residues 1-22; it reads METQELRGALALLLLCFFTSAS. The Laminin G-like domain occupies 23-193; it reads QDLQVIDLLT…VESMKIILGG (171 aa). Intrachain disulfides connect cysteine 278–cysteine 289, cysteine 283–cysteine 300, cysteine 303–cysteine 314, cysteine 320–cysteine 332, cysteine 326–cysteine 341, cysteine 344–cysteine 368, cysteine 374–cysteine 388, cysteine 382–cysteine 397, cysteine 400–cysteine 412, cysteine 418–cysteine 432, cysteine 426–cysteine 442, cysteine 444–cysteine 455, cysteine 471–cysteine 478, cysteine 483–cysteine 503, cysteine 519–cysteine 539, cysteine 542–cysteine 562, cysteine 578–cysteine 598, cysteine 601–cysteine 621, cysteine 639–cysteine 659, cysteine 679–cysteine 699, and cysteine 715–cysteine 936. An N-linked (GlcNAc...) asparagine glycan is attached at asparagine 310. In terms of domain architecture, EGF-like 1; calcium-binding spans 316–354; the sequence is DINECAHADPCFPGSSCINTMPGFHCEACPRGYKGTQVS. The region spanning 370-410 is the EGF-like 2; calcium-binding domain; it reads DIDECNDGNNGGCDPNSICTNTVGSFKCGPCRLGFLGNQSQ. A glycan (N-linked (GlcNAc...) asparagine) is linked at asparagine 407. Residues 414–456 enclose the EGF-like 3 domain; it reads PARTCHSPAHSPCHIHAHCLFERNGAVSCQCNVGWAGNGNVCG. TSP type-3 repeat units lie at residues 457-491, 492-527, 528-550, 551-586, 587-609, 610-647, 648-687, and 688-723; these read TDTD…NSGQ, EDAD…NKDQ, QNSD…NNDQ, KDTD…NPLQ, TDRD…NPTQ, TDAD…NSSQ, LDSD…NPNQ, and KDSD…EVTL. Disordered regions lie at residues 518-537 and 546-702; these read NCRL…SFGD and PNND…CEDD. Residues 555 to 568 show a composition bias toward acidic residues; sequence GNGEGDACDNDVDG. Acidic residues predominate over residues 612–628; the sequence is ADSDLVGDVCDTNEDSD. Asparagine 644 carries N-linked (GlcNAc...) asparagine glycosylation. Over residues 650-667 the composition is skewed to acidic residues; sequence SDNDGLGDECDGDDDNDG. The TSP C-terminal domain occupies 727-941; sequence RAYQTVVLDP…LQYRCNDTVP (215 aa). A glycan (N-linked (GlcNAc...) asparagine) is linked at asparagine 937.

It belongs to the thrombospondin family. In terms of assembly, oligomer; disulfide-linked.

Functionally, adhesive glycoprotein that mediates cell-to-cell and cell-to-matrix interactions. Can bind to fibrinogen, fibronectin, laminin and type V collagen. This Homo sapiens (Human) protein is Thrombospondin-3 (THBS3).